A 602-amino-acid chain; its full sequence is Sodium- and chloride-dependent GABA transporter 2 (602 aa).

The Cytoplasmic segment spans residues 1–40; sequence MENRASGTTSNGETKPVCPAMEKVEEDGTLEREHWNNKME. The next 3 helical transmembrane spans lie at 41–61, 68–88, and 121–141; these read FVLSVAGEIIGLGNVWRFPYL, GAFFIPYLIFLFTCGIPVFFL, and IVSLLNVYYIVVLAWALFYLF. The Extracellular segment spans residues 142 to 206; it reads SSFTTDLPWG…GIQHLGSLRW (65 aa). A disulfide bond links Cys-153 and Cys-162. 3 N-linked (GlcNAc...) asparagine glycosylation sites follow: Asn-169, Asn-173, and Asn-178. The next 2 helical transmembrane spans lie at 207–227 and 233–253; these read ELVLCLLLAWIICYFCIWKGV and VVYFTATFPYLMLVVLLIRGV. N-linked (GlcNAc...) asparagine glycosylation occurs at Asn-269. The next 7 helical transmembrane spans lie at 282–302, 319–339, 366–386, 418–438, 453–473, 490–510, and 528–548; these read AGTQIFFSFAICLGCLTALGS, ILNSSTSFMAGFAIFSILGFM, VVMLPFSPLWACCFFFMVVLL, VLILIVSVISFFIGLIMLTEG, GMCLLFVAIFESLCVAWVYGA, PLIKYCWLFFTPAVCLATFLF, and WWGDALGWLLALSSMICIPAW. Over 549 to 602 the chain is Cytoplasmic; the sequence is SIYKLRTLKGPLRERLRQLVCPAEDLPQKNQPEPTAPATPMTSLLRLTELESNC. Residue Thr-587 is modified to Phosphothreonine. A Phosphoserine modification is found at Ser-591.

The protein belongs to the sodium:neurotransmitter symporter (SNF) (TC 2.A.22) family. SLC6A13 subfamily. As to expression, expressed at high levels in liver, followed by kidney and leptomeninges, and very low levels in the cerebellum (at protein level). In the brain, detected in some blood vessels (at protein level). In the kidney, expressed in the cortex, including parts of the proximal tubules, but not in the medulla (at protein level). In the liver, highest expression in periportal hepatocytes, with highest density at the vascular side (at protein level). Also detected at low levels in other organs, including skeletal muscle.

The protein resides in the cell membrane. Its subcellular location is the basolateral cell membrane. It carries out the reaction 4-aminobutanoate(out) + chloride(out) + 2 Na(+)(out) = 4-aminobutanoate(in) + chloride(in) + 2 Na(+)(in). The catalysed reaction is taurine(out) + chloride(out) + 2 Na(+)(out) = taurine(in) + chloride(in) + 2 Na(+)(in). The enzyme catalyses beta-alanine(out) + chloride(out) + 2 Na(+)(out) = beta-alanine(in) + chloride(in) + 2 Na(+)(in). It catalyses the reaction hypotaurine(out) + chloride(out) + 2 Na(+)(out) = hypotaurine(in) + chloride(in) + 2 Na(+)(in). Its activity is regulated as follows. Gamma-aminobutyric acid (GABA) transport is inhibited by beta-alanine, taurine, hypotaurine, beta-guanidinopropionic acid, 2,3-diaminopropionic acid, guvacine and nipecotic acid. Beta-alanine transport is inhibited by GABA. Taurine transport is inhibited by GABA, beta-alanine, SNAP-5114, nigericin, nipecotic acid and ouabain. Mediates sodium- and chloride-dependent transport of gamma-aminobutyric acid (GABA). Can also mediate transport of beta-alanine, taurine and hypotaurine and is the major taurine transporter in hepatocytes. This is Sodium- and chloride-dependent GABA transporter 2 (Slc6a13) from Mus musculus (Mouse).